Reading from the N-terminus, the 505-residue chain is Flagellin (505 aa).

This sequence belongs to the bacterial flagellin family.

It localises to the secreted. Its subcellular location is the bacterial flagellum. In terms of biological role, flagellin is the subunit protein which polymerizes to form the filaments of bacterial flagella. The sequence is that of Flagellin (fliC) from Salmonella rostock.